The chain runs to 147 residues: UPF0306 protein YhbP (147 aa).

Belongs to the UPF0306 family.

This Escherichia coli O157:H7 protein is UPF0306 protein YhbP.